A 279-amino-acid chain; its full sequence is Ribosomal RNA small subunit methyltransferase A (279 aa).

S-adenosyl-L-methionine contacts are provided by Asn-28, Leu-30, Gly-55, Glu-77, Asp-103, and Asn-122.

The protein belongs to the class I-like SAM-binding methyltransferase superfamily. rRNA adenine N(6)-methyltransferase family. RsmA subfamily.

It localises to the cytoplasm. It catalyses the reaction adenosine(1518)/adenosine(1519) in 16S rRNA + 4 S-adenosyl-L-methionine = N(6)-dimethyladenosine(1518)/N(6)-dimethyladenosine(1519) in 16S rRNA + 4 S-adenosyl-L-homocysteine + 4 H(+). Functionally, specifically dimethylates two adjacent adenosines (A1518 and A1519) in the loop of a conserved hairpin near the 3'-end of 16S rRNA in the 30S particle. May play a critical role in biogenesis of 30S subunits. The protein is Ribosomal RNA small subunit methyltransferase A of Ruegeria pomeroyi (strain ATCC 700808 / DSM 15171 / DSS-3) (Silicibacter pomeroyi).